Here is a 370-residue protein sequence, read N- to C-terminus: tRNA 2-selenouridine synthase (370 aa).

One can recognise a Rhodanese domain in the interval 12-136; sequence FLDDVPMMDM…MRTFLLETTQ (125 aa). The active-site S-selanylcysteine intermediate is Cys95.

The protein belongs to the SelU family. In terms of assembly, monomer.

It carries out the reaction 5-methylaminomethyl-2-thiouridine(34) in tRNA + selenophosphate + (2E)-geranyl diphosphate + H2O + H(+) = 5-methylaminomethyl-2-selenouridine(34) in tRNA + (2E)-thiogeraniol + phosphate + diphosphate. It catalyses the reaction 5-methylaminomethyl-2-thiouridine(34) in tRNA + (2E)-geranyl diphosphate = 5-methylaminomethyl-S-(2E)-geranyl-thiouridine(34) in tRNA + diphosphate. The catalysed reaction is 5-methylaminomethyl-S-(2E)-geranyl-thiouridine(34) in tRNA + selenophosphate + H(+) = 5-methylaminomethyl-2-(Se-phospho)selenouridine(34) in tRNA + (2E)-thiogeraniol. The enzyme catalyses 5-methylaminomethyl-2-(Se-phospho)selenouridine(34) in tRNA + H2O = 5-methylaminomethyl-2-selenouridine(34) in tRNA + phosphate. Its function is as follows. Involved in the post-transcriptional modification of the uridine at the wobble position (U34) of tRNA(Lys), tRNA(Glu) and tRNA(Gln). Catalyzes the conversion of 2-thiouridine (S2U-RNA) to 2-selenouridine (Se2U-RNA). Acts in a two-step process involving geranylation of 2-thiouridine (S2U) to S-geranyl-2-thiouridine (geS2U) and subsequent selenation of the latter derivative to 2-selenouridine (Se2U) in the tRNA chain. The polypeptide is tRNA 2-selenouridine synthase (Pseudomonas putida (strain ATCC 47054 / DSM 6125 / CFBP 8728 / NCIMB 11950 / KT2440)).